The following is a 1299-amino-acid chain: DNA-directed RNA polymerase subunit beta' (1299 aa).

Zn(2+) is bound by residues Cys60, Cys62, Cys75, and Cys78. Mg(2+)-binding residues include Asp535, Asp537, and Asp539. Zn(2+) contacts are provided by Cys877, Cys954, Cys961, and Cys964.

Belongs to the RNA polymerase beta' chain family. The RNAP catalytic core consists of 2 alpha, 1 beta, 1 beta' and 1 omega subunit. When a sigma factor is associated with the core the holoenzyme is formed, which can initiate transcription. Requires Mg(2+) as cofactor. Zn(2+) is required as a cofactor.

The catalysed reaction is RNA(n) + a ribonucleoside 5'-triphosphate = RNA(n+1) + diphosphate. Its function is as follows. DNA-dependent RNA polymerase catalyzes the transcription of DNA into RNA using the four ribonucleoside triphosphates as substrates. In Renibacterium salmoninarum (strain ATCC 33209 / DSM 20767 / JCM 11484 / NBRC 15589 / NCIMB 2235), this protein is DNA-directed RNA polymerase subunit beta'.